A 141-amino-acid chain; its full sequence is Large ribosomal subunit protein uL11 (141 aa).

This sequence belongs to the universal ribosomal protein uL11 family. In terms of assembly, part of the ribosomal stalk of the 50S ribosomal subunit. Interacts with L10 and the large rRNA to form the base of the stalk. L10 forms an elongated spine to which L12 dimers bind in a sequential fashion forming a multimeric L10(L12)X complex. Post-translationally, one or more lysine residues are methylated.

Functionally, forms part of the ribosomal stalk which helps the ribosome interact with GTP-bound translation factors. This is Large ribosomal subunit protein uL11 from Streptococcus uberis (strain ATCC BAA-854 / 0140J).